Consider the following 1072-residue polypeptide: Carbamoyl phosphate synthase large chain (1072 aa).

Residues 1–401 (MPKRLDINTI…SLLKAVRSLE (401 aa)) form a carboxyphosphate synthetic domain region. ATP is bound by residues Arg129, Arg169, Gly175, Gly176, Lys208, Ile210, Glu215, Gly241, Val242, His243, Gln284, and Glu298. Residues 133 to 327 (RTLMQELNEP…IAKLAAKIAV (195 aa)) form the ATP-grasp 1 domain. Mg(2+) is bound by residues Gln284, Glu298, and Asn300. The Mn(2+) site is built by Gln284, Glu298, and Asn300. The interval 402–546 (LGIYHLELDH…YSTYADENES (145 aa)) is oligomerization domain. The tract at residues 547–929 (IVTDRKSVVV…ALYKGLVASG (383 aa)) is carbamoyl phosphate synthetic domain. Residues 671–861 (EAALTKLGIP…MANVATKVIL (191 aa)) form the ATP-grasp 2 domain. ATP contacts are provided by Arg707, Arg746, Glu752, Gly777, Val778, His779, Ser780, Gln820, and Glu832. Residues Gln820, Glu832, and Asn834 each contribute to the Mg(2+) site. Residues Gln820, Glu832, and Asn834 each coordinate Mn(2+). Residues 930–1072 (INIPTHGSVI…QTKRHEVVHA (143 aa)) form the MGS-like domain. An allosteric domain region spans residues 930–1072 (INIPTHGSVI…QTKRHEVVHA (143 aa)).

The protein belongs to the CarB family. Composed of two chains; the small (or glutamine) chain promotes the hydrolysis of glutamine to ammonia, which is used by the large (or ammonia) chain to synthesize carbamoyl phosphate. Tetramer of heterodimers (alpha,beta)4. Requires Mg(2+) as cofactor. It depends on Mn(2+) as a cofactor.

The enzyme catalyses hydrogencarbonate + L-glutamine + 2 ATP + H2O = carbamoyl phosphate + L-glutamate + 2 ADP + phosphate + 2 H(+). It catalyses the reaction hydrogencarbonate + NH4(+) + 2 ATP = carbamoyl phosphate + 2 ADP + phosphate + 2 H(+). It functions in the pathway amino-acid biosynthesis; L-arginine biosynthesis; carbamoyl phosphate from bicarbonate: step 1/1. It participates in pyrimidine metabolism; UMP biosynthesis via de novo pathway; (S)-dihydroorotate from bicarbonate: step 1/3. Large subunit of the glutamine-dependent carbamoyl phosphate synthetase (CPSase). CPSase catalyzes the formation of carbamoyl phosphate from the ammonia moiety of glutamine, carbonate, and phosphate donated by ATP, constituting the first step of 2 biosynthetic pathways, one leading to arginine and/or urea and the other to pyrimidine nucleotides. The large subunit (synthetase) binds the substrates ammonia (free or transferred from glutamine from the small subunit), hydrogencarbonate and ATP and carries out an ATP-coupled ligase reaction, activating hydrogencarbonate by forming carboxy phosphate which reacts with ammonia to form carbamoyl phosphate. The chain is Carbamoyl phosphate synthase large chain from Bacillus cereus (strain AH820).